The chain runs to 312 residues: Glyoxylate/hydroxypyruvate reductase A (312 aa).

Arg-227 is an active-site residue. The Proton donor role is filled by His-275.

This sequence belongs to the D-isomer specific 2-hydroxyacid dehydrogenase family. GhrA subfamily.

The protein resides in the cytoplasm. The catalysed reaction is glycolate + NADP(+) = glyoxylate + NADPH + H(+). The enzyme catalyses (R)-glycerate + NAD(+) = 3-hydroxypyruvate + NADH + H(+). It carries out the reaction (R)-glycerate + NADP(+) = 3-hydroxypyruvate + NADPH + H(+). Its function is as follows. Catalyzes the NADPH-dependent reduction of glyoxylate and hydroxypyruvate into glycolate and glycerate, respectively. The protein is Glyoxylate/hydroxypyruvate reductase A of Salmonella typhi.